The following is a 190-amino-acid chain: uncharacterized protein (190 aa).

This is an uncharacterized protein from Acanthamoeba polyphaga mimivirus (APMV).